Here is a 313-residue protein sequence, read N- to C-terminus: Probable pyridoxal 5'-phosphate synthase subunit PDX1.2 (313 aa).

Asp-42 lines the D-ribose 5-phosphate pocket. Lys-99 acts as the Schiff-base intermediate with D-ribose 5-phosphate in catalysis. D-ribose 5-phosphate is bound at residue Gly-171. Arg-183 lines the D-glyceraldehyde 3-phosphate pocket. D-ribose 5-phosphate contacts are provided by residues Gly-232 and 253–254; that span reads GS.

It belongs to the PdxS/SNZ family.

The enzyme catalyses aldehydo-D-ribose 5-phosphate + D-glyceraldehyde 3-phosphate + L-glutamine = pyridoxal 5'-phosphate + L-glutamate + phosphate + 3 H2O + H(+). It functions in the pathway cofactor biosynthesis; pyridoxal 5'-phosphate biosynthesis. Its function is as follows. Catalyzes the formation of pyridoxal 5'-phosphate from ribose 5-phosphate (RBP), glyceraldehyde 3-phosphate (G3P) and ammonia. The ammonia is provided by PDX2. Can also use ribulose 5-phosphate and dihydroxyacetone phosphate as substrates, resulting from enzyme-catalyzed isomerization of RBP and G3P, respectively. Also plays an indirect role in resistance to singlet oxygen-generating photosensitizers. This Oryza sativa subsp. japonica (Rice) protein is Probable pyridoxal 5'-phosphate synthase subunit PDX1.2 (PDX12).